Here is a 199-residue protein sequence, read N- to C-terminus: MANVRARIELMVGQKSNIPAEMLSFEGLETDKEHVAVVFNQADKHQSTPLVRMHSECLTGDVFHSSRCDCGEQLEETINRMSESGGIILYLRQEGRGIGLYNKLDAYELQSQGMNTYEANNHLGFGDDLRDFKEAAQMLEALNISKIKLVTNNPKKIKDIQNYGIEIDEVVNTHAHVKQGNEHYLHSKAAHGHKLNFDK.

Residue 52 to 56 (RMHSE) participates in GTP binding. Cys57, Cys68, and Cys70 together coordinate Zn(2+). GTP contacts are provided by residues Gln73, 94 to 96 (EGR), and Thr116. The Proton acceptor role is filled by Asp128. The Nucleophile role is filled by Arg130. The GTP site is built by Thr151 and Lys156.

Belongs to the GTP cyclohydrolase II family. The cofactor is Zn(2+).

The catalysed reaction is GTP + 4 H2O = 2,5-diamino-6-hydroxy-4-(5-phosphoribosylamino)-pyrimidine + formate + 2 phosphate + 3 H(+). The protein operates within cofactor biosynthesis; riboflavin biosynthesis; 5-amino-6-(D-ribitylamino)uracil from GTP: step 1/4. In terms of biological role, catalyzes the conversion of GTP to 2,5-diamino-6-ribosylamino-4(3H)-pyrimidinone 5'-phosphate (DARP), formate and pyrophosphate. The polypeptide is GTP cyclohydrolase-2 (Aliivibrio fischeri (strain ATCC 700601 / ES114) (Vibrio fischeri)).